The primary structure comprises 329 residues: Quinate dehydrogenase (329 aa).

It carries out the reaction L-quinate + NAD(+) = 3-dehydroquinate + NADH + H(+). The protein operates within aromatic compound metabolism; 3,4-dihydroxybenzoate biosynthesis; 3-dehydroquinate from D-quinate (NAD(+) route): step 1/1. This Emericella nidulans (strain FGSC A4 / ATCC 38163 / CBS 112.46 / NRRL 194 / M139) (Aspergillus nidulans) protein is Quinate dehydrogenase (qutB).